The chain runs to 277 residues: Urease accessory protein UreD (277 aa).

It belongs to the UreD family. UreD, UreF and UreG form a complex that acts as a GTP-hydrolysis-dependent molecular chaperone, activating the urease apoprotein by helping to assemble the nickel containing metallocenter of UreC. The UreE protein probably delivers the nickel.

The protein localises to the cytoplasm. In terms of biological role, required for maturation of urease via the functional incorporation of the urease nickel metallocenter. This Yersinia pestis (strain Pestoides F) protein is Urease accessory protein UreD.